A 315-amino-acid chain; its full sequence is Methionyl-tRNA formyltransferase (315 aa).

113–116 (SLLP) contributes to the (6S)-5,6,7,8-tetrahydrofolate binding site.

The protein belongs to the Fmt family.

The catalysed reaction is L-methionyl-tRNA(fMet) + (6R)-10-formyltetrahydrofolate = N-formyl-L-methionyl-tRNA(fMet) + (6S)-5,6,7,8-tetrahydrofolate + H(+). In terms of biological role, attaches a formyl group to the free amino group of methionyl-tRNA(fMet). The formyl group appears to play a dual role in the initiator identity of N-formylmethionyl-tRNA by promoting its recognition by IF2 and preventing the misappropriation of this tRNA by the elongation apparatus. This is Methionyl-tRNA formyltransferase from Escherichia coli O45:K1 (strain S88 / ExPEC).